We begin with the raw amino-acid sequence, 114 residues long: Iron-sulfur cluster insertion protein ErpA (114 aa).

The iron-sulfur cluster site is built by Cys-42, Cys-106, and Cys-108.

It belongs to the HesB/IscA family. In terms of assembly, homodimer. The cofactor is iron-sulfur cluster.

Its function is as follows. Required for insertion of 4Fe-4S clusters for at least IspG. This is Iron-sulfur cluster insertion protein ErpA from Hamiltonella defensa subsp. Acyrthosiphon pisum (strain 5AT).